Consider the following 333-residue polypeptide: Leucine carboxyl methyltransferase 1 (333 aa).

S-adenosyl-L-methionine contacts are provided by residues Arg-79, Gly-108, Asp-131, 180 to 181 (NV), and Glu-206.

Belongs to the methyltransferase superfamily. LCMT family.

The catalysed reaction is [phosphatase 2A protein]-C-terminal L-leucine + S-adenosyl-L-methionine = [phosphatase 2A protein]-C-terminal L-leucine methyl ester + S-adenosyl-L-homocysteine. Its function is as follows. Methylates the carboxyl group of the C-terminal leucine residue of protein phosphatase 2A catalytic subunits to form alpha-leucine ester residues. The protein is Leucine carboxyl methyltransferase 1 (PPM1) of Kluyveromyces lactis (strain ATCC 8585 / CBS 2359 / DSM 70799 / NBRC 1267 / NRRL Y-1140 / WM37) (Yeast).